The primary structure comprises 265 residues: MKTTTMSQLRQWKQEKRKFATLTAYDASFAQLFAEQGIQVLLVGDSLGMTLQGFDSTLPVTVADVAYHTRAVRRGAPHCLLLADMPFMSYATPELAFTHAAELMRAGANMVKLEGGSWLCDTIRMLAERAVPVCGHLGLTPQSVNIFGGYKVQGREEVAANQLLQDAIVLEQAGAQLLVLECVPVELAQRVTEELTIPVIGIGAGNVTDGQILVMHDALGITGGHTPKFSKNFLAHSAGDIRAAIKLYIEEVEGGIYPAEEHTFQ.

Residues aspartate 45 and aspartate 84 each contribute to the Mg(2+) site. 3-methyl-2-oxobutanoate-binding positions include 45–46 (DS), aspartate 84, and lysine 112. Residue glutamate 114 coordinates Mg(2+). Glutamate 181 serves as the catalytic Proton acceptor.

It belongs to the PanB family. As to quaternary structure, homodecamer; pentamer of dimers. Mg(2+) is required as a cofactor.

It is found in the cytoplasm. It catalyses the reaction 3-methyl-2-oxobutanoate + (6R)-5,10-methylene-5,6,7,8-tetrahydrofolate + H2O = 2-dehydropantoate + (6S)-5,6,7,8-tetrahydrofolate. Its pathway is cofactor biosynthesis; (R)-pantothenate biosynthesis; (R)-pantoate from 3-methyl-2-oxobutanoate: step 1/2. In terms of biological role, catalyzes the reversible reaction in which hydroxymethyl group from 5,10-methylenetetrahydrofolate is transferred onto alpha-ketoisovalerate to form ketopantoate. The chain is 3-methyl-2-oxobutanoate hydroxymethyltransferase from Yersinia pseudotuberculosis serotype O:1b (strain IP 31758).